A 218-amino-acid chain; its full sequence is Protein N-lysine methyltransferase METTL21A (218 aa).

S-adenosyl-L-methionine is bound by residues Trp47, 73–75 (GAG), Asp94, Trp125, and Ala143.

This sequence belongs to the methyltransferase superfamily. METTL21 family. As to quaternary structure, interacts with heat shock protein 70 family members; at least some of these proteins are methylation substrates.

The protein localises to the cytoplasm. It catalyses the reaction L-lysyl-[protein] + 3 S-adenosyl-L-methionine = N(6),N(6),N(6)-trimethyl-L-lysyl-[protein] + 3 S-adenosyl-L-homocysteine + 3 H(+). Protein-lysine methyltransferase that selectively trimethylates residues in heat shock protein 70 (HSP70) family members. Contributes to the in vivo trimethylation of Lys residues in HSPA1 and HSPA8. In vitro methylates 'Lys-561' in HSPA1, 'Lys-564' in HSPA2, 'Lys-585' in HSPA5, 'Lys-563' in HSPA6 and 'Lys-561' in HSPA8. The sequence is that of Protein N-lysine methyltransferase METTL21A (METTL21A) from Homo sapiens (Human).